The chain runs to 644 residues: Macrolide export ATP-binding/permease protein MacB (644 aa).

The region spanning 4-242 (IECKNINRCF…SNVGRIREKA (239 aa)) is the ABC transporter domain. 40–47 (GQSGSGKS) serves as a coordination point for ATP. 4 consecutive transmembrane segments (helical) span residues 270-290 (LLTM…VALG), 524-544 (IALI…LVSV), 574-594 (LICI…SLVF), and 607-627 (AASV…FGFM).

Belongs to the ABC transporter superfamily. Macrolide exporter (TC 3.A.1.122) family. As to quaternary structure, homodimer.

The protein localises to the cell inner membrane. Functionally, non-canonical ABC transporter that contains transmembrane domains (TMD), which form a pore in the inner membrane, and an ATP-binding domain (NBD), which is responsible for energy generation. Confers resistance against macrolides. The chain is Macrolide export ATP-binding/permease protein MacB from Neisseria gonorrhoeae (strain ATCC 700825 / FA 1090).